A 393-amino-acid polypeptide reads, in one-letter code: Methylthioribose-1-phosphate isomerase (393 aa).

Asp-265 functions as the Proton donor in the catalytic mechanism.

Belongs to the eIF-2B alpha/beta/delta subunits family. MtnA subfamily.

It localises to the cytoplasm. Its subcellular location is the nucleus. It catalyses the reaction 5-(methylsulfanyl)-alpha-D-ribose 1-phosphate = 5-(methylsulfanyl)-D-ribulose 1-phosphate. It functions in the pathway amino-acid biosynthesis; L-methionine biosynthesis via salvage pathway; L-methionine from S-methyl-5-thio-alpha-D-ribose 1-phosphate: step 1/6. Functionally, catalyzes the interconversion of methylthioribose-1-phosphate (MTR-1-P) into methylthioribulose-1-phosphate (MTRu-1-P). The polypeptide is Methylthioribose-1-phosphate isomerase (Cryptococcus neoformans var. neoformans serotype D (strain B-3501A) (Filobasidiella neoformans)).